A 384-amino-acid polypeptide reads, in one-letter code: Epoxyqueuosine reductase (384 aa).

Aspartate 144 acts as the Proton donor in catalysis. The region spanning 186–218 is the 4Fe-4S ferredoxin-type domain; sequence LPLPVDQPVEEGCGKCVACMTICPTGAIVEPYT. Residues cysteine 198, cysteine 201, cysteine 204, cysteine 208, cysteine 224, cysteine 251, cysteine 254, and cysteine 258 each contribute to the [4Fe-4S] cluster site.

It belongs to the QueG family. As to quaternary structure, monomer. Cob(II)alamin serves as cofactor. The cofactor is [4Fe-4S] cluster.

The protein resides in the cytoplasm. It catalyses the reaction epoxyqueuosine(34) in tRNA + AH2 = queuosine(34) in tRNA + A + H2O. The protein operates within tRNA modification; tRNA-queuosine biosynthesis. In terms of biological role, catalyzes the conversion of epoxyqueuosine (oQ) to queuosine (Q), which is a hypermodified base found in the wobble positions of tRNA(Asp), tRNA(Asn), tRNA(His) and tRNA(Tyr). This Salmonella typhimurium (strain LT2 / SGSC1412 / ATCC 700720) protein is Epoxyqueuosine reductase.